Here is a 25-residue protein sequence, read N- to C-terminus: KEICFPRLGCFSDDAPWAGIAQRPL.

The cysteines at positions 4 and 10 are disulfide-linked.

It belongs to the AB hydrolase superfamily. Lipase family. In terms of assembly, forms a 1:1 stoichiometric complex with (pro)colipase/CLPS.

It localises to the secreted. The enzyme catalyses a triacylglycerol + H2O = a diacylglycerol + a fatty acid + H(+). The catalysed reaction is 1,2,3-tributanoylglycerol + H2O = dibutanoylglycerol + butanoate + H(+). It carries out the reaction 1,2,3-tri-(9Z-octadecenoyl)-glycerol + H2O = di-(9Z)-octadecenoylglycerol + (9Z)-octadecenoate + H(+). It catalyses the reaction all-trans-retinyl hexadecanoate + H2O = all-trans-retinol + hexadecanoate + H(+). The enzyme catalyses 1,2-di-(9Z-octadecenoyl)-glycerol + H2O = (9Z-octadecenoyl)-glycerol + (9Z)-octadecenoate + H(+). Its activity is regulated as follows. Inhibited by bile salts, is reactivated by (pro)colipase/CLPS. Plays an important role in fat metabolism. It preferentially splits the esters of long-chain fatty acids at positions 1 and 3, producing mainly 2-monoacylglycerol and free fatty acids, and shows considerably higher activity against insoluble emulsified substrates than against soluble ones. The polypeptide is Pancreatic triacylglycerol lipase (PNLIP) (Felis catus (Cat)).